The chain runs to 540 residues: Terminase large subunit (540 aa).

Residues Asp-352, Asp-424, and Asp-523 each contribute to the Mn(2+) site.

This sequence belongs to the skunavirus terminase large subunit family. As to quaternary structure, interacts with the terminase small subunit; the active complex is probably heterooligomeric. Mn(2+) serves as cofactor. Requires Mg(2+) as cofactor.

Probable terminase large subunit. The terminase large subunit acts as an ATP driven molecular motor necessary for viral DNA translocation into empty capsids and as an endonuclease that cuts the viral genome to initiate and to end a packaging reaction. The terminase lies at a unique vertex of the procapsid and is composed of two subunits, a small terminase subunit involved in viral DNA recognition (packaging sequence), and a large terminase subunit possessing endonucleolytic and ATPase activities. Both terminase subunits heterooligomerize and are docked on the portal protein to form the packaging machine. The terminase large subunit exhibits endonuclease activity and cleaves the viral genome concatemer. In Lactococcus lactis (Lactococcus lactis bacteriophage p2), this protein is Terminase large subunit.